A 159-amino-acid chain; its full sequence is Transcription antitermination protein NusB (159 aa).

Belongs to the NusB family.

Involved in transcription antitermination. Required for transcription of ribosomal RNA (rRNA) genes. Binds specifically to the boxA antiterminator sequence of the ribosomal RNA (rrn) operons. The chain is Transcription antitermination protein NusB from Xanthomonas axonopodis pv. citri (strain 306).